The chain runs to 24 residues: Metallothionein (24 aa).

Cd(2+) is bound by residues Cys3, Cys5, Cys8, Cys10, Cys17, Cys19, and Cys22.

The protein belongs to the metallothionein superfamily. Type 8 family. Contains 4 disulfide bonds.

Its function is as follows. Metallothioneins have a high content of cysteine residues that bind various heavy metals. This is Metallothionein from Neonectria lugdunensis (Aquatic fungus).